We begin with the raw amino-acid sequence, 134 residues long: C-C motif chemokine 21 (134 aa).

Positions 1 to 23 are cleaved as a signal peptide; that stretch reads MAQSLALSLLILVLAFGIPRTQG. 3 disulfide bridges follow: Cys-31–Cys-57, Cys-32–Cys-75, and Cys-103–Cys-122. The interval 88–134 is disordered; that stretch reads QHLDKTPSPQKPAQGCRKDRGASKTGKKGKGSKGCKRTERSQTPKGP. Residues 98-134 form a C-terminal basic extension region; the sequence is KPAQGCRKDRGASKTGKKGKGSKGCKRTERSQTPKGP. Residues 112 to 122 show a composition bias toward basic residues; sequence TGKKGKGSKGC. Positions 123 to 134 are enriched in basic and acidic residues; that stretch reads KRTERSQTPKGP.

It belongs to the intercrine beta (chemokine CC) family. As to quaternary structure, monomer. Binds to CCR7. Interacts with PDPN; relocalizes PDPN to the basolateral membrane. Interacts with TNFAIP6 (via Link domain). Interacts with GPR174. As to expression, highly expressed in high endothelial venules of lymph nodes, spleen and appendix. Intermediate levels found in small intestine, thyroid gland and trachea. Low level expression in thymus, bone marrow, liver, and pancreas. Also found in tonsil, fetal heart and fetal spleen.

It is found in the secreted. Its function is as follows. Inhibits hemopoiesis and stimulates chemotaxis. Chemotactic in vitro for thymocytes and activated T-cells, but not for B-cells, macrophages, or neutrophils. Shows preferential activity towards naive T-cells. May play a role in mediating homing of lymphocytes to secondary lymphoid organs. Binds to atypical chemokine receptor ACKR4 and mediates the recruitment of beta-arrestin (ARRB1/2) to ACKR4. The chain is C-C motif chemokine 21 (CCL21) from Homo sapiens (Human).